Here is a 342-residue protein sequence, read N- to C-terminus: Polyprenyl transferase trt2 (342 aa).

9 helical membrane-spanning segments follow: residues 71–91 (VVGVAYTAAIAPVSLPATVLL), 95–115 (IILSLWGFLIRSGGCAWNDLI), 141–161 (AALLTAIIFGCGGLLLLLLPS), 163–183 (CTVEAGIILFFALLYPFGKRF), 187–207 (PQLILVNIAWAIPMAMSSLEV), 216–236 (TLSMCIFIASVIVMIDVVYAC), 261–278 (LAYGFFFSGAISLLLGGV), 282–304 (LGLPFIVFSVGGHIFGFLRFLSV), and 319–339 (AKSSCLLATVFWVLGFFLEYL).

The protein belongs to the UbiA prenyltransferase family. The cofactor is Mg(2+).

It localises to the membrane. The catalysed reaction is 3,5-dimethylorsellinate + (2E,6E)-farnesyl diphosphate = (3R)-3-farnesyl-6-hydroxy-2,3,5-trimethyl-4-oxocyclohexa-1,5-diene-1-carboxylate + diphosphate + H(+). Its pathway is secondary metabolite biosynthesis; terpenoid biosynthesis. Polyprenyl transferase; part of the gene cluster that mediates the biosynthesis of terretonin, a fungal meroterpenoid that acts as a mycotoxin. The first step of the pathway is the synthesis of 3,5-dimethylorsellinic acid (DMOA) by the polyketide synthase trt4. DMOA is then prenylated into farnesyl-DMOA by the polyprenyl transferase trt2. Methylation by the methyltransferase trt5 then leads to farnesyl-DMOA methyl ester which is further subject to epoxidation by the FAD-dependent monooxygenase trt8 to yield epoxyfarnesyl-DMOA methyl ester. Cyclization of epoxyfarnesyl-DMOA methyl ester by the terpene cyclase trt1 leads to a tetracycle intermediate which is in turn converted to preterretonin. Dehydrogenase trt9 comes next to transform preterretonin to preterrenoid. The FAD-dependent monooxygenase trt3 is then required for the C-hydroxylation at C16 of preterrenoid to yield terrenoid. The cytochrome P450 trt6 catalyzes three successive oxidations to transform terrenoid into an unstable intermediate, which then undergoes the D-ring expansion and unusual rearrangement of the methoxy group to afford the core skeleton of terretonin. Trt14 catalyzes the D-ring expansion of terretonin involving intramolecular methoxy rearrangement as well as the hydrolysis of the expanded D-ring and the methyl ester moiety. Finally, the nonheme iron-dependent dioxygenase trt7 accomplishes the last two oxidation reactions steps to complete the biosynthesis of terretonin. Terretonin C is produced via spontaneous decarboxylation of the terretonin precursor. Another shunt product of the terretonin biosynthesis is dihydrofarnesyl-DMOA, derived from epoxyfarnesyl-DMOA through hydrolysis of the epoxide. The protein is Polyprenyl transferase trt2 of Aspergillus terreus (strain NIH 2624 / FGSC A1156).